The sequence spans 269 residues: 5'-nucleotidase SurE (269 aa).

The a divalent metal cation site is built by Asp-11, Asp-12, Ser-43, and Asn-101.

It belongs to the SurE nucleotidase family. Requires a divalent metal cation as cofactor.

It localises to the cytoplasm. It catalyses the reaction a ribonucleoside 5'-phosphate + H2O = a ribonucleoside + phosphate. Functionally, nucleotidase that shows phosphatase activity on nucleoside 5'-monophosphates. This is 5'-nucleotidase SurE from Prochlorococcus marinus subsp. pastoris (strain CCMP1986 / NIES-2087 / MED4).